A 471-amino-acid polypeptide reads, in one-letter code: Argininosuccinate lyase (471 aa).

It belongs to the lyase 1 family. Argininosuccinate lyase subfamily.

Its subcellular location is the cytoplasm. It catalyses the reaction 2-(N(omega)-L-arginino)succinate = fumarate + L-arginine. The protein operates within amino-acid biosynthesis; L-arginine biosynthesis; L-arginine from L-ornithine and carbamoyl phosphate: step 3/3. The polypeptide is Argininosuccinate lyase (Acidiphilium cryptum (strain JF-5)).